The following is a 403-amino-acid chain: Serine/threonine transporter SstT (403 aa).

The next 9 helical transmembrane spans lie at 14–34 (VTQIVIGLLAGIALALLAPAI), 44–64 (VFVSALKAVAPVLVFILVMAS), 79–99 (ILWLYLLGTFAAAVVAVVASM), 138–158 (ALLNANFIGVLTWAIGLGVAL), 175–195 (GVTLIVRVVIRFAPLGIFGLV), 214–234 (LAVLIGCMLFVALVMNPLIVF), 295–315 (MAGAAITITVLTLAAVHTLGI), 327–347 (VVAAVCACGASGVAGGSLLLI), and 353–373 (LFGIPSEIAMQVVAVGFIIGV).

The protein belongs to the dicarboxylate/amino acid:cation symporter (DAACS) (TC 2.A.23) family.

The protein resides in the cell inner membrane. It carries out the reaction L-serine(in) + Na(+)(in) = L-serine(out) + Na(+)(out). The enzyme catalyses L-threonine(in) + Na(+)(in) = L-threonine(out) + Na(+)(out). Its function is as follows. Involved in the import of serine and threonine into the cell, with the concomitant import of sodium (symport system). The protein is Serine/threonine transporter SstT of Pseudomonas putida (strain ATCC 700007 / DSM 6899 / JCM 31910 / BCRC 17059 / LMG 24140 / F1).